A 432-amino-acid chain; its full sequence is Adenylosuccinate synthetase (432 aa).

GTP is bound by residues 11–17 (GDEGKGK) and 39–41 (GHT). D12 acts as the Proton acceptor in catalysis. Residues D12 and G39 each coordinate Mg(2+). Residues 12 to 15 (DEGK), 37 to 40 (NAGH), T134, R148, N230, T245, and R309 each bind IMP. H40 functions as the Proton donor in the catalytic mechanism. 305–311 (VTTGRKR) lines the substrate pocket. GTP is bound by residues R311, 337 to 339 (KLD), and 419 to 421 (GTG).

This sequence belongs to the adenylosuccinate synthetase family. In terms of assembly, homodimer. The cofactor is Mg(2+).

The protein resides in the cytoplasm. The enzyme catalyses IMP + L-aspartate + GTP = N(6)-(1,2-dicarboxyethyl)-AMP + GDP + phosphate + 2 H(+). The protein operates within purine metabolism; AMP biosynthesis via de novo pathway; AMP from IMP: step 1/2. In terms of biological role, plays an important role in the de novo pathway and in the salvage pathway of purine nucleotide biosynthesis. Catalyzes the first committed step in the biosynthesis of AMP from IMP. In Candida glabrata (strain ATCC 2001 / BCRC 20586 / JCM 3761 / NBRC 0622 / NRRL Y-65 / CBS 138) (Yeast), this protein is Adenylosuccinate synthetase.